The chain runs to 505 residues: Maturase K (505 aa).

It belongs to the intron maturase 2 family. MatK subfamily.

It localises to the plastid. The protein resides in the chloroplast. In terms of biological role, usually encoded in the trnK tRNA gene intron. Probably assists in splicing its own and other chloroplast group II introns. This chain is Maturase K, found in Morus alba (White mulberry).